The following is a 904-amino-acid chain: Shieldin complex subunit 2 (904 aa).

Residues 1–60 (MSGGSQVHIFWGAPVAPLKMTVSQDTASLMSVADPWKKIHLLYSQHSLYLKDEKQHKNLE) are sufficient for interaction with SHLD3 and MAD2L2. An interaction with ASTE1 region spans residues 1–568 (MSGGSQVHIF…AYVSSKHSYL (568 aa)). A mediates interaction with SHLD1 region spans residues 721–891 (KCSGVVLIQA…LQQDFSLLDF (171 aa)).

This sequence belongs to the SHLD2 family. As to quaternary structure, component of the shieldin complex, consisting of SHLD1, SHLD2, SHLD3 and MAD2L2/REV7. Within the complex, SHLD2 forms a scaffold which interacts with a SHLD3-MAD2L2 subcomplex via its N-terminus, and with SHLD1 via its C-terminus. Interacts with TP53BP1. Interacts with RIF1. Interacts with ASTE1.

The protein resides in the chromosome. Functionally, component of the shieldin complex, which plays an important role in repair of DNA double-stranded breaks (DSBs). During G1 and S phase of the cell cycle, the complex functions downstream of TP53BP1 to promote non-homologous end joining (NHEJ) and suppress DNA end resection. Mediates various NHEJ-dependent processes including immunoglobulin class-switch recombination, and fusion of unprotected telomeres. This Pongo abelii (Sumatran orangutan) protein is Shieldin complex subunit 2.